We begin with the raw amino-acid sequence, 414 residues long: Serine hydroxymethyltransferase (414 aa).

(6S)-5,6,7,8-tetrahydrofolate is bound by residues Leu121 and 125-127; that span reads GHL. N6-(pyridoxal phosphate)lysine is present on Lys229.

The protein belongs to the SHMT family. As to quaternary structure, homodimer. Pyridoxal 5'-phosphate is required as a cofactor.

It localises to the cytoplasm. The catalysed reaction is (6R)-5,10-methylene-5,6,7,8-tetrahydrofolate + glycine + H2O = (6S)-5,6,7,8-tetrahydrofolate + L-serine. Its pathway is one-carbon metabolism; tetrahydrofolate interconversion. It functions in the pathway amino-acid biosynthesis; glycine biosynthesis; glycine from L-serine: step 1/1. Its function is as follows. Catalyzes the reversible interconversion of serine and glycine with tetrahydrofolate (THF) serving as the one-carbon carrier. This reaction serves as the major source of one-carbon groups required for the biosynthesis of purines, thymidylate, methionine, and other important biomolecules. Also exhibits THF-independent aldolase activity toward beta-hydroxyamino acids, producing glycine and aldehydes, via a retro-aldol mechanism. The chain is Serine hydroxymethyltransferase from Verminephrobacter eiseniae (strain EF01-2).